Here is a 96-residue protein sequence, read N- to C-terminus: Growth-regulated alpha protein (96 aa).

The signal sequence occupies residues 1 to 24; it reads MVSATRSLLCAALPVLATSRQATG. Intrachain disulfides connect Cys33-Cys59 and Cys35-Cys75.

Belongs to the intercrine alpha (chemokine CxC) family. As to quaternary structure, monomer and homodimer. At least expressed in the lung and trachea.

It is found in the secreted. Its function is as follows. Has chemotactic activity for neutrophils. Contributes to neutrophil activation during inflammation. The protein is Growth-regulated alpha protein (Cxcl1) of Rattus norvegicus (Rat).